Reading from the N-terminus, the 69-residue chain is Mu-conotoxin-like Am3.3 (69 aa).

A signal peptide spans 1 to 20 (MMSKLGVLLTICLLLFPLTA). A propeptide spanning residues 21–52 (VPLDGDQPADRPAERMQDDISSENHPMFDAIR) is cleaved from the precursor. Cys68 is subject to Cysteine amide.

The protein belongs to the conotoxin M family. In terms of processing, is not hydroxylated. Contains 3 disulfide bonds. As to expression, expressed by the venom duct.

The protein resides in the secreted. Mu-conotoxins block voltage-gated sodium channels (Nav). In Conus amadis (Amadis cone), this protein is Mu-conotoxin-like Am3.3.